Reading from the N-terminus, the 2062-residue chain is Unconventional myosin-X (2062 aa).

Met-1 is modified (N-acetylmethionine). The Myosin motor domain occupies Glu-63–Glu-739. Residues Asn-104, Tyr-113, Gly-160–Glu-165, and Asn-215 contribute to the ATP site. Positions Leu-619–Thr-641 are actin-binding. IQ domains are found at residues Ile-742 to Thr-771, Val-765 to Val-794, and Leu-788 to Glu-817. The SAH stretch occupies residues Glu-814–Glu-882. A disordered region spans residues Lys-822–Ala-844. The stretch at Asn-883–Ala-933 forms a coiled coil. 3 positions are modified to phosphoserine: Ser-961, Ser-964, and Ser-967. 2 disordered regions span residues Gly-963–Thr-1047 and Gln-1062–Pro-1089. Residues Ala-993 to Ala-1007 are compositionally biased toward acidic residues. Positions Gln-1062–Asp-1085 are enriched in polar residues. Thr-1162 carries the phosphothreonine modification. PH domains follow at residues Glu-1216–Ser-1314 and Glu-1396–Asp-1501. Residues Leu-1551–Ile-1699 enclose the MyTH4 domain. One can recognise an FERM domain in the interval Met-1704 to Arg-2048.

This sequence belongs to the TRAFAC class myosin-kinesin ATPase superfamily. Myosin family. As to quaternary structure, monomer, when in an inactive conformation in the cytosol. Homodimer in its active, membrane-bound conformation; antiparallel coiled coil-mediated dimer formation. Interacts with ECPAS. Interacts with DCC and ITGB5; the presence of DCC inhibits ITGB5 binding. Interacts with tubulin; ITGB5 or DCC binding inhibits tubulin binding. Interacts strongly with CALM3 and weakly with CALM, the CALM3 interaction is essential for function in filopodial extension and motility. Interacts with ITGB1, ITGB3 and ITGB5. Interacts with NEO1. Interacts with VASP. The initiator methionine for isoform Headless is removed. In terms of tissue distribution, detected in brain, heart, kidney, liver, stomach, skeletal muscle, lung, testis and skin. Isoform Headless is expressed in embryonic and neuronal stem cells, and enriched in proliferating and migrating cells.

Its subcellular location is the cytoplasm. It is found in the cytosol. The protein localises to the cell projection. The protein resides in the lamellipodium. It localises to the ruffle. Its subcellular location is the cytoskeleton. It is found in the filopodium tip. The protein localises to the cell cortex. The protein resides in the filopodium membrane. Functionally, myosins are actin-based motor molecules with ATPase activity. Unconventional myosins serve in intracellular movements. MYO10 binds to actin filaments and actin bundles and functions as a plus end-directed motor. Moves with higher velocity and takes larger steps on actin bundles than on single actin filaments. The tail domain binds to membranous compartments containing phosphatidylinositol 3,4,5-trisphosphate or integrins, and mediates cargo transport along actin filaments. Regulates cell shape, cell spreading and cell adhesion. Stimulates the formation and elongation of filopodia. In hippocampal neurons it induces the formation of dendritic filopodia by trafficking the actin-remodeling protein VASP to the tips of filopodia, where it promotes actin elongation. Plays a role in formation of the podosome belt in osteoclasts. In terms of biological role, functions as a dominant-negative regulator of isoform 1, suppressing its filopodia-inducing and axon outgrowth-promoting activities. In hippocampal neurons, it increases VASP retention in spine heads to induce spine formation and spine head expansion. The chain is Unconventional myosin-X (Myo10) from Mus musculus (Mouse).